Consider the following 172-residue polypeptide: Diphosphoinositol polyphosphate phosphohydrolase 1 (172 aa).

Position 1 is an N-acetylmethionine (methionine 1). Residues arginine 10, lysine 18–arginine 20, and serine 39–arginine 41 each bind substrate. Positions tyrosine 17–threonine 142 constitute a Nudix hydrolase domain. Mg(2+)-binding residues include glycine 50 and glutamate 66. Residues glycine 51 to glycine 72 carry the Nudix box motif. Catalysis depends on glutamate 69, which acts as the Proton acceptor. Glutamate 70 contacts Mg(2+). Substrate-binding positions include arginine 89–histidine 91, arginine 115, and lysine 133.

Belongs to the Nudix hydrolase family. DIPP subfamily. In terms of assembly, monomer. Requires Mg(2+) as cofactor. It depends on Mn(2+) as a cofactor. Zn(2+) is required as a cofactor. In terms of tissue distribution, widely expressed. Expressed at higher level in brain, heart, pancreas and liver. Also expressed in placenta, lung and kidney.

The protein resides in the cytoplasm. Its subcellular location is the nucleus. The catalysed reaction is diphospho-myo-inositol polyphosphate + H2O = myo-inositol polyphosphate + phosphate.. The enzyme catalyses 5-diphospho-1D-myo-inositol 1,2,3,4,6-pentakisphosphate + H2O = 1D-myo-inositol hexakisphosphate + phosphate + H(+). It carries out the reaction 3,5-bis(diphospho)-1D-myo-inositol 1,2,4,6-tetrakisphosphate + H2O = 3-diphospho-1D-myo-inositol 1,2,4,5,6-pentakisphosphate + phosphate + 2 H(+). It catalyses the reaction [phosphate](n+1) + n H2O = (n+1) phosphate + n H(+). The catalysed reaction is P(1),P(5)-bis(5'-adenosyl) pentaphosphate + H2O = ADP + ATP + 2 H(+). The enzyme catalyses P(1),P(6)-bis(5'-adenosyl) hexaphosphate + H2O = 2 ATP + 2 H(+). It carries out the reaction P(1),P(4)-bis(5'-adenosyl) tetraphosphate + H2O = AMP + ATP + 2 H(+). It catalyses the reaction a 5'-end (N(7)-methyl 5'-triphosphoguanosine)-ribonucleoside in mRNA + H2O = N(7)-methyl-GMP + a 5'-end diphospho-ribonucleoside in mRNA + 2 H(+). The catalysed reaction is a 5'-end (N(7)-methyl 5'-triphosphoguanosine)-ribonucleoside in mRNA + H2O = N(7)-methyl-GDP + a 5'-end phospho-ribonucleoside in mRNA + 2 H(+). With respect to regulation, endopolyphospahatase activity is inhibited by NaF, NaPPi, beta-glycerol phosphate and heparin. 5-diphosphoinositol pentakisphosphate (5-InsP7) inhibits its mRNA decapping activity. Functionally, cleaves a beta-phosphate from the diphosphate groups in PP-InsP5 (diphosphoinositol pentakisphosphate) and [PP]2-InsP4 (bisdiphosphoinositol tetrakisphosphate), suggesting that it may play a role in signal transduction. InsP6 (inositol hexakisphosphate) is not a substrate. Acts as a negative regulator of the ERK1/2 pathway. Also able to catalyze the hydrolysis of dinucleoside oligophosphates, with diadenosine 5',5'''-P1,P6-hexaphosphate (Ap6A) and diadenosine 5',5'''- P1,P5-pentaphosphate (Ap5A) being the preferred substrates. The major reaction products are ADP and p4a from Ap6A and ADP and ATP from Ap5A. Also able to hydrolyze 5-phosphoribose 1-diphosphate. Acts as a decapping enzyme that modulates the stability of a subset of mRNAs implicated in cell motility. Hydrolyzes monomethylated capped RNA after both the alpha- and beta-phosphates generating m7GMP + ppRNA and m7GDP + pRNA. Can hydrolyze unmethylated capped RNAs. Divalent cations zinc, magnesium and manganese determine its substrate specificity. Exhibits diphosphoinositol polyphosphate phosphohydrolase in the presence of magnesium ions, diadenosine hexaphosphate hydrolase activity in the presence of manganese ions and endopolyphosphatase activity in the presence of zinc ions. Plays an important role in limiting DNA damage and maintaining cell survival upon oxidative stress via its endopolyphosphatase activity. The sequence is that of Diphosphoinositol polyphosphate phosphohydrolase 1 from Homo sapiens (Human).